A 522-amino-acid chain; its full sequence is Gypsy retrotransposon integrase-like protein 1 (522 aa).

In terms of domain architecture, Integrase catalytic spans 135-292 (KVENPWSLVT…TPYFQMFSRN (158 aa)). S502 carries the phosphoserine modification.

As to expression, widely expressed. Also found in tumors originating from parathyroid gland, colon, stomach, bladder, uterus and prostate.

This chain is Gypsy retrotransposon integrase-like protein 1 (GIN1), found in Homo sapiens (Human).